A 351-amino-acid polypeptide reads, in one-letter code: D-alanine--D-alanine ligase (351 aa).

An ATP-grasp domain is found at 135–344 (KMAFAQAGLP…FAELVDQLIQ (210 aa)). 171-226 (EQRLGYPCFVKPANLGSSVGIAKVRSRSELEKALDSAASYDRRIVIETGVKAREVE) contacts ATP. Mg(2+) contacts are provided by Asp-297, Glu-311, and Asn-313.

The protein belongs to the D-alanine--D-alanine ligase family. The cofactor is Mg(2+). Mn(2+) serves as cofactor.

The protein resides in the cytoplasm. The enzyme catalyses 2 D-alanine + ATP = D-alanyl-D-alanine + ADP + phosphate + H(+). The protein operates within cell wall biogenesis; peptidoglycan biosynthesis. Cell wall formation. This chain is D-alanine--D-alanine ligase, found in Rippkaea orientalis (strain PCC 8801 / RF-1) (Cyanothece sp. (strain PCC 8801)).